A 207-amino-acid polypeptide reads, in one-letter code: Large ribosomal subunit protein uL4 (207 aa).

The disordered stretch occupies residues 44-77; sequence RRQGTHDTKTRSEVRGGGRKPWRQKGTGRARHGT. The span at 47–59 shows a compositional bias: basic and acidic residues; that stretch reads GTHDTKTRSEVRG. Basic residues predominate over residues 60–77; sequence GGRKPWRQKGTGRARHGT.

It belongs to the universal ribosomal protein uL4 family. Part of the 50S ribosomal subunit.

Functionally, one of the primary rRNA binding proteins, this protein initially binds near the 5'-end of the 23S rRNA. It is important during the early stages of 50S assembly. It makes multiple contacts with different domains of the 23S rRNA in the assembled 50S subunit and ribosome. In terms of biological role, forms part of the polypeptide exit tunnel. This Desulforudis audaxviator (strain MP104C) protein is Large ribosomal subunit protein uL4.